Reading from the N-terminus, the 1018-residue chain is Serine/threonine-protein phosphatase BSL2 (1018 aa).

Positions 1-75 (MDEDSSMVAD…AAAVVGQEQQ (75 aa)) are disordered. Residues 41 to 57 (SPPPEGGSVPTPPPSDP) show a composition bias toward pro residues. Residues 63-75 (QQQAAAVVGQEQQ) are compositionally biased toward low complexity. 5 Kelch repeats span residues 149-195 (TSAG…VATA), 253-301 (YLMA…TASA), 306-356 (LLLL…VFVN), 362-409 (SGGA…DAAG), and 430-479 (LIFI…RLPG). The disordered stretch occupies residues 569 to 590 (DRDCGAEATPSGKPTFSLIKPD). A Phosphoserine modification is found at serine 627. The Mn(2+) site is built by aspartate 720, histidine 722, aspartate 754, and asparagine 786. The active-site Proton donor is the histidine 787. 2 residues coordinate Mn(2+): histidine 839 and histidine 918. Serine 975 bears the Phosphoserine mark. Positions 994–1011 (ANRPATPTRGRPQNSNDR) are enriched in polar residues. Residues 994–1018 (ANRPATPTRGRPQNSNDRGGSLAWM) are disordered.

The protein belongs to the PPP phosphatase family. BSU subfamily. As to quaternary structure, interacts with BSK8. Requires Mn(2+) as cofactor. Expressed throughout the plant, with a higher level in younger parts.

It localises to the cytoplasm. Its subcellular location is the cell membrane. The protein localises to the nucleus. It carries out the reaction O-phospho-L-seryl-[protein] + H2O = L-seryl-[protein] + phosphate. It catalyses the reaction O-phospho-L-threonyl-[protein] + H2O = L-threonyl-[protein] + phosphate. Its function is as follows. Phosphatase involved in elongation process, probably by acting as a regulator of brassinolide signaling. In Arabidopsis thaliana (Mouse-ear cress), this protein is Serine/threonine-protein phosphatase BSL2 (BSL2).